Reading from the N-terminus, the 122-residue chain is Large ribosomal subunit protein uL14 (122 aa).

Belongs to the universal ribosomal protein uL14 family. Part of the 50S ribosomal subunit. Forms a cluster with proteins L3 and L19. In the 70S ribosome, L14 and L19 interact and together make contacts with the 16S rRNA in bridges B5 and B8.

Binds to 23S rRNA. Forms part of two intersubunit bridges in the 70S ribosome. The protein is Large ribosomal subunit protein uL14 of Mycoplasma genitalium (strain ATCC 33530 / DSM 19775 / NCTC 10195 / G37) (Mycoplasmoides genitalium).